A 164-amino-acid chain; its full sequence is CASP-like protein 1C1 (164 aa).

Topologically, residues 1 to 15 are cytoplasmic; the sequence is MGDVEIPPLVKQIVR. The helical transmembrane segment at 16-36 threads the bilayer; that stretch reads GLRGLAFLATILATSFMAASH. Residues 37-56 are Extracellular-facing; it reads ERAIFPFDYKADYTDLMLFK. Residues 57-77 form a helical membrane-spanning segment; the sequence is AFLGANIAASLYSFFFVCLPP. At 78–83 the chain is on the cytoplasmic side; the sequence is KSLLWR. Residues 84-104 form a helical membrane-spanning segment; the sequence is LAIVLDVIMFGLLVAMDSAAI. The Extracellular portion of the chain corresponds to 105–132; the sequence is AAAYLHKHGDSQAFWPPICSQVPTYCYR. A helical membrane pass occupies residues 133-153; it reads VILAISIGFGGVFMFLLIIII. Residues 154-164 are Cytoplasmic-facing; the sequence is SISVILNPLLV.

Belongs to the Casparian strip membrane proteins (CASP) family. Homodimer and heterodimers.

The protein resides in the cell membrane. The polypeptide is CASP-like protein 1C1 (Populus trichocarpa (Western balsam poplar)).